A 659-amino-acid polypeptide reads, in one-letter code: Tetratricopeptide repeat protein 30 homolog (659 aa).

7 TPR repeats span residues 3–36 (SQNM…LNGI), 43–76 (RAGL…VPDV), 143–176 (ATVK…GGFN), 178–210 (HIAY…GIRN), 391–424 (CRSA…RAWI), 450–483 (TWRL…NYDD), and 533–566 (CIVN…GSGA).

It belongs to the TTC30/dfy-1/fleer family.

The protein resides in the cell projection. The protein localises to the cilium. In terms of biological role, required for polyglutamylation of axonemal tubulin in sensory cilia. Plays a role in anterograde intraflagellar transport (IFT), the process by which cilia precursors are transported from the base of the cilium to the site of their incorporation at the tip. The protein is Tetratricopeptide repeat protein 30 homolog of Aedes aegypti (Yellowfever mosquito).